The chain runs to 380 residues: Cytochrome b (380 aa).

Transmembrane regions (helical) follow at residues 34–54 (FGSLLGICLATQILTGLLLAM), 78–99 (WLIRNLHANGASFFFICIYLHI), 114–134 (WNTGILLLLTLMATAFVGYVL), and 179–199 (FFALHFLLPFVIAGLTLIHLT). Heme b contacts are provided by His-84 and His-98. His-183 and His-197 together coordinate heme b. An a ubiquinone-binding site is contributed by His-202. Transmembrane regions (helical) follow at residues 227–247 (LKDILGFMLMFLSLTTLALFS), 289–309 (LGGVLALAASVLMMFLSPLLH), 321–341 (LSQLLFWTLVANLFILTWVGS), and 348–368 (FIIIGQLASFTYFTILLILLP).

It belongs to the cytochrome b family. The cytochrome bc1 complex contains 11 subunits: 3 respiratory subunits (MT-CYB, CYC1 and UQCRFS1), 2 core proteins (UQCRC1 and UQCRC2) and 6 low-molecular weight proteins (UQCRH/QCR6, UQCRB/QCR7, UQCRQ/QCR8, UQCR10/QCR9, UQCR11/QCR10 and a cleavage product of UQCRFS1). This cytochrome bc1 complex then forms a dimer. It depends on heme b as a cofactor.

Its subcellular location is the mitochondrion inner membrane. In terms of biological role, component of the ubiquinol-cytochrome c reductase complex (complex III or cytochrome b-c1 complex) that is part of the mitochondrial respiratory chain. The b-c1 complex mediates electron transfer from ubiquinol to cytochrome c. Contributes to the generation of a proton gradient across the mitochondrial membrane that is then used for ATP synthesis. This is Cytochrome b (MT-CYB) from Pelagodroma marina (White-faced storm-petrel).